The primary structure comprises 512 residues: Reduced folate transporter (512 aa).

Met1 bears the N-acetylmethionine mark. Residues 1–29 lie on the Cytoplasmic side of the membrane; sequence MVPTGQVAEKQACEEPRQDRELKSWRWLV. The helical transmembrane segment at 30–50 threads the bilayer; sequence FYLCFFGFMAQLRPGESFITP. Folate contacts are provided by Ile48 and Thr49. Over 51–62 the chain is Extracellular; the sequence is YLLERNFTKEQV. N-linked (GlcNAc...) asparagine glycosylation occurs at Asn56. A helical transmembrane segment spans residues 63–85; it reads TNEIIPMLPYSHLAVLVPIFLLT. Residues 86 to 89 lie on the Cytoplasmic side of the membrane; the sequence is DYLR. The chain crosses the membrane as a helical span at residues 90 to 110; that stretch reads YKPVLVLQCLSFVCVWLLLLL. The Extracellular segment spans residues 111 to 114; that stretch reads GTSV. A helical transmembrane segment spans residues 115–137; that stretch reads VHMQLMEVFYSITMAARIAYSSY. Residues Glu121 and Arg131 each coordinate folate. Residues 138-151 lie on the Cytoplasmic side of the membrane; the sequence is IFSLVQPSRYQRMA. The helical transmembrane segment at 152-176 threads the bilayer; it reads SYSRAAVLLGVFISSVLGQVLVTLG. Val162 provides a ligand contact to folate. Over 177–181 the chain is Extracellular; the sequence is GISTY. The chain crosses the membrane as a helical span at residues 182 to 200; that stretch reads MLNCISLGFILFSLSLSLF. The Cytoplasmic segment spans residues 201-266; the sequence is LKRPKRSLFF…ELVKNVRQPQ (66 aa). Residues 267-292 traverse the membrane as a helical segment; sequence LRLWCLWWVFNSAGYYLITYYVHVLW. Positions 281, 282, and 286 each coordinate folate. At 293–300 the chain is on the extracellular side; the sequence is KITDSRLN. A helical transmembrane segment spans residues 301–323; the sequence is YNGAVDAASTLLSAITAFTAGFV. Over 324-329 the chain is Cytoplasmic; it reads NIRWAL. Residues 330-350 traverse the membrane as a helical segment; that stretch reads WSKLVIASVIAIQAGLVFCMF. At 351-353 the chain is on the extracellular side; sequence QIP. The helical transmembrane segment at 354 to 377 threads the bilayer; sequence DIWVCYVTFVLFRGAYQFLVPIAT. Folate-binding residues include Arg366 and Gln370. Residues 378 to 391 lie on the Cytoplasmic side of the membrane; the sequence is FQIASSLSKELCAL. The chain crosses the membrane as a helical span at residues 392–415; that stretch reads VFGINTFLATALKTSITLVVSDKR. The required for substrate-binding stretch occupies residues 400-412; it reads ATALKTSITLVVS. Residues 416–423 are Extracellular-facing; that stretch reads GLGLQVHQ. Residues 424–448 traverse the membrane as a helical segment; the sequence is QFRIYFMYFLTLSIICLAWAGLDGL. Residues 449 to 512 are Cytoplasmic-facing; sequence RYYRRGRHQP…RADLRVEAKA (64 aa). Phosphoserine is present on residues Ser466, Ser471, and Ser476. The segment at 479–512 is disordered; that stretch reads DGDLRRPQPSAPQLLPEDGSVEDGRADLRVEAKA. Positions 500-512 are enriched in basic and acidic residues; sequence EDGRADLRVEAKA.

Belongs to the reduced folate carrier (RFC) transporter (TC 2.A.48) family. Expressed in liver, heart, brain, spleen, lung and skeletal muscle.

The protein resides in the cell membrane. It localises to the apical cell membrane. Its subcellular location is the basolateral cell membrane. The enzyme catalyses 5-amino-1-(5-phospho-beta-D-ribosyl)imidazole-4-carboxamide(in) + (6S)-5-methyl-5,6,7,8-tetrahydrofolate(out) = 5-amino-1-(5-phospho-beta-D-ribosyl)imidazole-4-carboxamide(out) + (6S)-5-methyl-5,6,7,8-tetrahydrofolate(in). Functionally, antiporter that mediates the import of reduced folates, driven by the export of organic anions. Also acts as an importer of immunoreactive cyclic dinucleotides, but with a lower transporter activity. Mechanistically, acts as a secondary active transporter, which exports intracellular organic anions down their concentration gradients to facilitate the uptake of its substrates. Has high affinity for N5-methyltetrahydrofolate, the predominant circulating form of folate. Also mediates the import of antifolate drug methotrexate. 5-amino-4-imidazolecarboxamide riboside (AICAR), when phosphorylated to AICAR monophosphate, can serve as an organic anion for antiporter activity. The sequence is that of Reduced folate transporter from Rattus norvegicus (Rat).